The primary structure comprises 238 residues: MTDTAENQTPNDRQAGHPRSIRSFVLRQSHMTAAQQRAIDTLWDSFGIDYQATPADLDARFGSSRPKILEIGFGMGMASAEIARRLPETDFLAIDVHGPGVGNLLKLINENHLENIRVMRHDAVEVVKNMLQDGSLDGIHIFFPDPWHKKRHHKRRLIQAPFIAKLLPKLKTGGYIHLATDWEEYAQQMLEVLSSFDSLQNTAADYAPTPDYRPETKFEARGKRLGHGVWDLVFKRIG.

Residues 1 to 12 (MTDTAENQTPND) show a composition bias toward polar residues. Residues 1–20 (MTDTAENQTPNDRQAGHPRS) are disordered. S-adenosyl-L-methionine-binding residues include E70, D95, D122, and D145. The active site involves D145. Residues K149, D181, and 216-219 (TKFE) each bind substrate.

It belongs to the class I-like SAM-binding methyltransferase superfamily. TrmB family.

The catalysed reaction is guanosine(46) in tRNA + S-adenosyl-L-methionine = N(7)-methylguanosine(46) in tRNA + S-adenosyl-L-homocysteine. It participates in tRNA modification; N(7)-methylguanine-tRNA biosynthesis. Catalyzes the formation of N(7)-methylguanine at position 46 (m7G46) in tRNA. The polypeptide is tRNA (guanine-N(7)-)-methyltransferase (Neisseria gonorrhoeae (strain NCCP11945)).